We begin with the raw amino-acid sequence, 37 residues long: Large ribosomal subunit protein bL36 (37 aa).

The protein belongs to the bacterial ribosomal protein bL36 family.

This Syntrophomonas wolfei subsp. wolfei (strain DSM 2245B / Goettingen) protein is Large ribosomal subunit protein bL36.